Reading from the N-terminus, the 342-residue chain is Ferrochelatase (342 aa).

H188 and E268 together coordinate Fe cation.

This sequence belongs to the ferrochelatase family.

It localises to the cytoplasm. The enzyme catalyses heme b + 2 H(+) = protoporphyrin IX + Fe(2+). The protein operates within porphyrin-containing compound metabolism; protoheme biosynthesis; protoheme from protoporphyrin-IX: step 1/1. In terms of biological role, catalyzes the ferrous insertion into protoporphyrin IX. The sequence is that of Ferrochelatase from Rickettsia conorii (strain ATCC VR-613 / Malish 7).